A 434-amino-acid polypeptide reads, in one-letter code: Indole diterpene prenyltransferase nodD2 (434 aa).

L-tryptophan contacts are provided by residues 85 to 86 (LI) and glutamate 94. Substrate-binding residues include arginine 107, lysine 194, arginine 268, lysine 270, tyrosine 272, glutamine 351, tyrosine 353, tyrosine 418, and tyrosine 422.

The protein belongs to the tryptophan dimethylallyltransferase family.

It participates in secondary metabolite biosynthesis. In terms of biological role, indole diterpene prenyltransferase; part of the gene cluster that mediates the biosynthesis of the indole diterpenes nodulisporic acids (NA). Nodulisporic acid A (NAA) and its chemically modified derivatives are of particular significance because of their highly potent insecticidal activity against blood-feeding arthropods and lack of observable adverse effects on mammals, in particular the tremogenicity associated with the paspaline-derived IDTs is not observed. The geranylgeranyl diphosphate (GGPP) synthase ggs1, localized outside of the cluster, is proposed to catalyze the first step in nodulisporic acid biosynthesis via conversion of farnesyl pyrophosphate and isopentyl pyrophosphate into geranylgeranyl pyrophosphate (GGPP). Condensation of indole-3-glycerol phosphate with GGPP by the prenyl transferase nodC then forms 3-geranylgeranylindole (3-GGI). Epoxidation by the FAD-dependent monooxygenase nodM leads to a single-epoxidized-GGI that is substrate of the terpene cyclase nodB for cyclization to yield emindole SB. The terminal methyl carbon, C28, of emindole SB is then oxidized by the cytochrome P450 monooxygenase nodW to produce nodulisporic acid F (NAF), the pentacyclic core of NAA. NAF is converted to nodulisporic acid E (NAE) via prenylation. This step is probably performed by one of the indole diterpene prenyltransferases nodD1 or nodD2. Several oxidation steps performed by the FAD-linked oxidoreductase nodO and one of the cytochrome P450 monooxygenase nodR, nodX or nodZ further convert NAE to nodulisporic acid D (NAD). NAD is substrate of cytochrome P450 monooxygenase nodJ to produce the precursor of nodulisporic acid C (NAC), converted to NAC by one of the indole diterpene prenyltransferases nodD1 or nodD2. The FAD-dependent monooxygenase nodY2 then oxidizes NAC to nodulisporic acid B (NAB). Finally NAB is converted to NAA by one of the cytochrome P450 monooxygenases nodR, nodX or nodZ. This is Indole diterpene prenyltransferase nodD2 from Hypoxylon pulicicidum.